Consider the following 401-residue polypeptide: Acetylornithine aminotransferase (401 aa).

Residues 121–122 and phenylalanine 154 each bind pyridoxal 5'-phosphate; that span reads GA. Position 157 (arginine 157) interacts with N(2)-acetyl-L-ornithine. 239–242 lines the pyridoxal 5'-phosphate pocket; that stretch reads DEVQ. Lysine 268 carries the N6-(pyridoxal phosphate)lysine modification. Serine 296 provides a ligand contact to N(2)-acetyl-L-ornithine. A pyridoxal 5'-phosphate-binding site is contributed by threonine 297.

This sequence belongs to the class-III pyridoxal-phosphate-dependent aminotransferase family. ArgD subfamily. As to quaternary structure, homodimer. Requires pyridoxal 5'-phosphate as cofactor.

The protein resides in the cytoplasm. The catalysed reaction is N(2)-acetyl-L-ornithine + 2-oxoglutarate = N-acetyl-L-glutamate 5-semialdehyde + L-glutamate. The protein operates within amino-acid biosynthesis; L-arginine biosynthesis; N(2)-acetyl-L-ornithine from L-glutamate: step 4/4. The polypeptide is Acetylornithine aminotransferase (Myxococcus xanthus).